Reading from the N-terminus, the 414-residue chain is Probable uracil permease (414 aa).

Residues 1–14 (MTNQIPPSLAENQS) lie on the Cytoplasmic side of the membrane. The helical transmembrane segment at 15-38 (KLKQSFVGLQMLFVAFGALVLVPL) threads the bilayer. At 39-42 (ITGL) the chain is on the periplasmic side. The chain crosses the membrane as a helical span at residues 43–62 (DSNTALLTAGVGTLLFQFCT). Over 63 to 65 (GKQ) the chain is Cytoplasmic. A discontinuously helical membrane pass occupies residues 66–82 (VPIFLASSFAFIAPIQY). Position 74 (Phe74) interacts with uracil. Over 83 to 91 (GVQTWGIAT) the chain is Periplasmic. A helical transmembrane segment spans residues 92–112 (TMGGLAFTGLVYFALSTLVKL). The Cytoplasmic portion of the chain corresponds to 113-124 (RGAEALQRFFPP). A helical transmembrane segment spans residues 125-146 (VVVGPVIIIIGMGLAPIAVDMS). Topologically, residues 147–155 (LGKNSAYAY) are periplasmic. A helical transmembrane segment spans residues 156-171 (NDAVLVSMVTLLTTLS). Topologically, residues 172 to 178 (VAVFAKG) are cytoplasmic. The helical transmembrane segment at 179–199 (LMKLIPIMFGITAGYILCLFL) threads the bilayer. Topologically, residues 200–224 (GLINFQPVIDAPWFSLPKLTTPEFN) are periplasmic. The chain crosses the membrane as a helical span at residues 225–248 (LEAILYMLPIAIAPAVEHVGGIMA). A uracil-binding site is contributed by Glu241. Topologically, residues 249 to 261 (ISSVTGKDFLKKP) are cytoplasmic. A helical transmembrane segment spans residues 262–281 (GLHRTLLGDGIATAAASLVG). Residues 282–298 (GPPNTTYAEVTGAVMLT) traverse the membrane as a discontinuously helical segment. Glu290 provides a ligand contact to uracil. Residues 299–301 (RNF) are Cytoplasmic-facing. The chain crosses the membrane as a helical span at residues 302–319 (NPNIMTWAAVWAIAISFC). Over 320–332 (GKVGAFLSTIPTI) the chain is Periplasmic. The chain crosses the membrane as a helical span at residues 333 to 354 (VMGGIMMLVFGSIAVVGMSTLI). Topologically, residues 355–365 (RGKVDVTEARN) are cytoplasmic. The segment at residues 366–401 (LCIISVVMTFGIGNMFVDVGNVSLKGISLCAIVAII) is an intramembrane region (discontinuously helical). Residues 402–414 (LNLVLPKAKNEVE) are Cytoplasmic-facing.

It belongs to the nucleobase:cation symporter-2 (NCS2) (TC 2.A.40) family.

It is found in the cell inner membrane. The enzyme catalyses uracil(in) + H(+)(in) = uracil(out) + H(+)(out). Its function is as follows. Transport of uracil in the cell. This chain is Probable uracil permease (uraA), found in Haemophilus influenzae (strain ATCC 51907 / DSM 11121 / KW20 / Rd).